We begin with the raw amino-acid sequence, 219 residues long: Glutathione S-transferase (219 aa).

The GST N-terminal domain occupies 2–89; that stretch reads SQPILGYWDI…YLGRKYKLNG (88 aa). Glutathione contacts are provided by residues 8–9, 44–47, Lys-51, 60–61, and 73–74; these read YW, RSEW, NL, and QT. In terms of domain architecture, GST C-terminal spans 91 to 207; it reads NDHEEIRISM…YIKKQQPKTF (117 aa). Residue Tyr-117 coordinates substrate.

The protein belongs to the GST superfamily. Mu family. In terms of assembly, homodimer.

The protein localises to the cytoplasm. It carries out the reaction RX + glutathione = an S-substituted glutathione + a halide anion + H(+). The polypeptide is Glutathione S-transferase (Dermatophagoides pteronyssinus (European house dust mite)).